A 36-amino-acid polypeptide reads, in one-letter code: Kappa-theraphotoxin-Pg1a (36 aa).

3 disulfides stabilise this stretch: Cys4/Cys19, Cys11/Cys24, and Cys18/Cys31.

The protein belongs to the neurotoxin 10 (Hwtx-1) family. 44 (Jztx-4) subfamily. Expressed by the venom gland.

It localises to the secreted. In terms of biological role, gating modifier of Kv2.1/KCNB1 (IC(50)=5.1 nM), Kv2.2/KCNB2 and Kv4.3/KCND3 channels (IC(50)=39 nM). Acts by shifting the channel activation to more depolarized potentials by stabilizing the resting conformation of the voltage sensor. It completely inhibits opening of the Kv2.1/KCNB1 channel at negative membrane voltages and dramatically shifts channel activation to positive voltages. May act by partitioning into lipid membranes and then by binding the voltage sensor paddle of the channel from a place within the membrane. The protein is Kappa-theraphotoxin-Pg1a of Chilobrachys guangxiensis (Chinese earth tiger tarantula).